The chain runs to 171 residues: 3-hydroxydecanoyl-[acyl-carrier-protein] dehydratase (171 aa).

The active site involves His-70.

Belongs to the thioester dehydratase family. FabA subfamily. Homodimer.

The protein resides in the cytoplasm. It catalyses the reaction a (3R)-hydroxyacyl-[ACP] = a (2E)-enoyl-[ACP] + H2O. The catalysed reaction is (3R)-hydroxydecanoyl-[ACP] = (2E)-decenoyl-[ACP] + H2O. It carries out the reaction (2E)-decenoyl-[ACP] = (3Z)-decenoyl-[ACP]. It participates in lipid metabolism; fatty acid biosynthesis. In terms of biological role, necessary for the introduction of cis unsaturation into fatty acids. Catalyzes the dehydration of (3R)-3-hydroxydecanoyl-ACP to E-(2)-decenoyl-ACP and then its isomerization to Z-(3)-decenoyl-ACP. Can catalyze the dehydratase reaction for beta-hydroxyacyl-ACPs with saturated chain lengths up to 16:0, being most active on intermediate chain length. The chain is 3-hydroxydecanoyl-[acyl-carrier-protein] dehydratase from Shewanella pealeana (strain ATCC 700345 / ANG-SQ1).